Reading from the N-terminus, the 727-residue chain is E3 ubiquitin-protein ligase LRSAM1 (727 aa).

6 LRR repeats span residues 30–51 (ADDILDISKCELSEIPFGAFAT), 56–77 (QKKVLIVHTNHLTSLLPKSCSL), 82–103 (TIKVLDLHENQLTALPDDMGQL), 105–126 (VLQVLNVERNQLTHLPRSIGNL), 128–150 (QLQTLNVKDNKLKELPDTLGELR), and 151–172 (SLRTLDISENEIQRLPQMLAHV). The interval 227–248 (GAENTQDSPDGPASRFSREEAE) is disordered. A Phosphoserine modification is found at Ser234. Coiled-coil stretches lie at residues 241–382 (RFSR…NLRQ) and 469–547 (RQIR…QENY). Residues 569–632 (GMERRLVALL…LRRAQDLLAV (64 aa)) enclose the SAM domain. Ser604 carries the post-translational modification Phosphoserine. 2 consecutive short sequence motifs (PTAP motif) follow at residues 653 to 656 (PTAP) and 665 to 668 (PSAP). An RING-type zinc finger spans residues 679 to 714 (CVVCLEREAQMVFLTCGHVCCCQQCCQPLRTCPLCR).

Interacts with TSG101. Interacts with PHF23. Interacts with FUS. Ubiquitination promoted by PHF23 leads to proteasomal degradation. As to expression, widely expressed.

Its subcellular location is the cytoplasm. It carries out the reaction S-ubiquitinyl-[E2 ubiquitin-conjugating enzyme]-L-cysteine + [acceptor protein]-L-lysine = [E2 ubiquitin-conjugating enzyme]-L-cysteine + N(6)-ubiquitinyl-[acceptor protein]-L-lysine.. It participates in protein modification; protein ubiquitination. E3 ubiquitin-protein ligase that mediates monoubiquitination of TSG101 at multiple sites, leading to inactivate the ability of TSG101 to sort endocytic (EGF receptors) and exocytic (viral proteins) cargos. Bacterial recognition protein that defends the cytoplasm from invasive pathogens. Localizes to several intracellular bacterial pathogens and generates the bacteria-associated ubiquitin signal leading to autophagy-mediated intracellular bacteria degradation (xenophagy). The chain is E3 ubiquitin-protein ligase LRSAM1 from Mus musculus (Mouse).